Consider the following 226-residue polypeptide: ATP synthase subunit C lysine N-methyltransferase (226 aa).

The helical transmembrane segment at 35–55 (VIGGTLVALYAVATPFVAPAL) threads the bilayer. Positions 48-82 (TPFVAPALRKLCLPYVPATTTQVKNVLKMLRSRTG) are required for mitochondrial location.

Belongs to the ANT/ATPSC lysine N-methyltransferase family.

The protein resides in the mitochondrion membrane. In terms of biological role, mitochondrial protein-lysine N-methyltransferase that promotes chronic pain. Involved in persistent inflammatory and neuropathic pain: methyltransferase activity in the mitochondria of sensory neurons promotes chronic pain via a pathway that depends on the production of reactive oxygen species (ROS) and on the engagement of spinal cord microglia. Protein-lysine N-methyltransferase activity is dependent on S-adenosyl-L-methionine. This chain is ATP synthase subunit C lysine N-methyltransferase (atpsckmt), found in Xenopus laevis (African clawed frog).